The sequence spans 1223 residues: Rho family-interacting cell polarization regulator 1 (1223 aa).

Ser22 carries the phosphoserine modification. Residues 83–112 (RGLTAYLEVHQQEQEKLQRQIKESKRNSRL) adopt a coiled-coil conformation. 2 positions are modified to phosphoserine: Ser345 and Ser347. Residue Thr351 is modified to Phosphothreonine. Residues 371 to 411 (NGTAWSLSSESSDDSSSPQLSGTARHSTPKPLVQQPEPLPV) are disordered. Composition is skewed to low complexity over residues 376 to 391 (SLSS…PQLS) and 399 to 411 (PKPL…PLPV). Phosphoserine is present on residues Ser451, Ser454, and Ser468. Low complexity-rich tracts occupy residues 566–586 (TTIG…GSVP) and 595–655 (TPSP…TSPT). Disordered regions lie at residues 566 to 771 (TTIG…QHSE) and 856 to 887 (FLND…LDSS). Positions 656 to 665 (QEAKMSTHTT) are enriched in polar residues. Positions 673–688 (TTTSPISTTESPSPST) are enriched in low complexity. Composition is skewed to polar residues over residues 693–703 (ISSSSAESTGP) and 725–741 (ASCT…SKPL). At Ser748 the chain carries Phosphoserine. Over residues 748 to 767 (SPEQIPKSPSSSPSSSAPEP) the composition is skewed to low complexity. Residues 858-867 (NDDEDEDNDG) show a composition bias toward acidic residues. Residues 868–885 (PGDRHTSSPEVVAEDRLD) are compositionally biased toward basic and acidic residues. Phosphoserine occurs at positions 874 and 875.

The protein belongs to the RIPOR family. As to quaternary structure, interacts (via N-terminus) with RHOA (GTP-bound form); this interaction links active RHOA to STK24 and STK26 kinases. Interacts with RHOB. Interacts with RHOC. Interacts (via C-terminus) with PDCD10; this interaction occurs in a Rho-independent manner. Interacts (via C-terminus) with STK24; this interaction occurs in a PDCD10-dependent and Rho-independent manner. Interacts (via C-terminus) with STK26; this interaction occurs in a PDCD10-dependent and Rho-independent manner. Interacts (via N-terminus) with 14-3-3 proteins; these interactions occur in a Rho-dependent manner. Expressed in the kidney exclusively by glomerular podocytes.

The protein resides in the cytoplasm. The protein localises to the golgi apparatus. In terms of biological role, downstream effector protein for Rho-type small GTPases that plays a role in cell polarity and directional migration. Acts as an adapter protein, linking active Rho proteins to STK24 and STK26 kinases, and hence positively regulates Golgi reorientation in polarized cell migration upon Rho activation. Involved in the subcellular relocation of STK26 from the Golgi to cytoplasm punctae in a Rho- and PDCD10-dependent manner upon serum stimulation. This Mus musculus (Mouse) protein is Rho family-interacting cell polarization regulator 1.